The following is a 407-amino-acid chain: Serine/threonine-protein kinase GRIK2 (407 aa).

Residues 21-64 (SGSRNQQSPKPYDDDTHSCDSDVTSTARGEEEEDEEEVEQKSRS) are disordered. Basic and acidic residues predominate over residues 31-40 (PYDDDTHSCD). In terms of domain architecture, Protein kinase spans 107 to 370 (YVRVCKIGSG…LKNVSEHPWV (264 aa)). ATP is bound by residues 113-121 (IGSGSYGKV) and Lys136. Thr153 bears the Phosphothreonine; by autocatalysis mark. Asp238 (proton acceptor) is an active-site residue. Position 260 is a phosphoserine; by KIN10 (Ser260).

The protein belongs to the protein kinase superfamily. Ser/Thr protein kinase family. As to quaternary structure, associates with the SNF1-related protein kinase (SnRK) complex. Interacts with AL1, a geminivirus (TGMV) protein essential for viral replication. In terms of tissue distribution, expressed in shoot apical meristem, leaf primordium and emerging petiole (at protein level).

The enzyme catalyses L-seryl-[protein] + ATP = O-phospho-L-seryl-[protein] + ADP + H(+). The catalysed reaction is L-threonyl-[protein] + ATP = O-phospho-L-threonyl-[protein] + ADP + H(+). Activated when autophosphorylated at Thr-153 and inactivated when phosphorylated at Ser-260 by SnRK1.1/KIN10. In terms of biological role, activates SnRK1.1/KIN10 and SnRK1.2/KIN11 by phosphorylation of their activation-loop 'Thr-198' and 'Thr-176', respectively. Required for the regulation by SnRK1 kinases of the transcription of a large set of genes, the modification the activity of metabolic enzymes, and the control of various nutrient-responsive cellular developmental processes. This is Serine/threonine-protein kinase GRIK2 (GRIK2) from Arabidopsis thaliana (Mouse-ear cress).